Reading from the N-terminus, the 138-residue chain is Phosphoribosyl-AMP cyclohydrolase (138 aa).

Mg(2+) is bound at residue D84. C85 is a binding site for Zn(2+). Residues D86 and D88 each coordinate Mg(2+). 2 residues coordinate Zn(2+): C102 and C109.

It belongs to the PRA-CH family. In terms of assembly, homodimer. The cofactor is Mg(2+). Zn(2+) is required as a cofactor.

It localises to the cytoplasm. It catalyses the reaction 1-(5-phospho-beta-D-ribosyl)-5'-AMP + H2O = 1-(5-phospho-beta-D-ribosyl)-5-[(5-phospho-beta-D-ribosylamino)methylideneamino]imidazole-4-carboxamide. The protein operates within amino-acid biosynthesis; L-histidine biosynthesis; L-histidine from 5-phospho-alpha-D-ribose 1-diphosphate: step 3/9. In terms of biological role, catalyzes the hydrolysis of the adenine ring of phosphoribosyl-AMP. In Burkholderia pseudomallei (strain K96243), this protein is Phosphoribosyl-AMP cyclohydrolase.